The primary structure comprises 221 residues: uncharacterized protein (221 aa).

In terms of domain architecture, MOSC spans 33-167 (RPAKSAVMLY…VSPGANLELL (135 aa)).

This is an uncharacterized protein from Bacillus subtilis (strain 168).